Reading from the N-terminus, the 306-residue chain is tRNA-cytidine(32) 2-sulfurtransferase (306 aa).

The PP-loop motif motif lies at 44-49; the sequence is SGGKDS. [4Fe-4S] cluster contacts are provided by C119, C122, and C210.

The protein belongs to the TtcA family. Homodimer. Requires Mg(2+) as cofactor. It depends on [4Fe-4S] cluster as a cofactor.

Its subcellular location is the cytoplasm. The enzyme catalyses cytidine(32) in tRNA + S-sulfanyl-L-cysteinyl-[cysteine desulfurase] + AH2 + ATP = 2-thiocytidine(32) in tRNA + L-cysteinyl-[cysteine desulfurase] + A + AMP + diphosphate + H(+). Its pathway is tRNA modification. Its function is as follows. Catalyzes the ATP-dependent 2-thiolation of cytidine in position 32 of tRNA, to form 2-thiocytidine (s(2)C32). The sulfur atoms are provided by the cysteine/cysteine desulfurase (IscS) system. This chain is tRNA-cytidine(32) 2-sulfurtransferase, found in Photorhabdus laumondii subsp. laumondii (strain DSM 15139 / CIP 105565 / TT01) (Photorhabdus luminescens subsp. laumondii).